Reading from the N-terminus, the 583-residue chain is Dynein axonemal assembly factor 3 (583 aa).

The disordered stretch occupies residues 455 to 534; it reads RGGGDSAVES…RADQIPPLEA (80 aa).

Belongs to the DNAAF3 family.

The protein localises to the cytoplasm. Its subcellular location is the dynein axonemal particle. Its function is as follows. Required for the assembly of axonemal inner and outer dynein arms. Involved in preassembly of dyneins into complexes before their transport into cilia. The protein is Dynein axonemal assembly factor 3 (Dnaaf3) of Rattus norvegicus (Rat).